A 305-amino-acid polypeptide reads, in one-letter code: 2-pyrone-4,6-dicarbaxylate hydrolase (305 aa).

Substrate is bound by residues 32-34 (HCH), Tyr50, Thr78, Arg125, Arg131, Tyr158, and His182. Asp258 (proton acceptor) is an active-site residue. Asn263 is a substrate binding site.

The protein belongs to the metallo-dependent hydrolases superfamily. PDC hydrolase family.

It catalyses the reaction 2-oxo-2H-pyran-4,6-dicarboxylate + H2O = (1E)-4-oxobut-1-ene-1,2,4-tricarboxylate + H(+). Its activity is regulated as follows. Strongly inhibited by 1 mM Zn(2+), Cu(2+), Mn(2+) and Co(2+) ions. Also inhibited by 5,5'-dithiobis(2-nitrobenzoic acid) (Ellman reagent) in vitro. Functionally, involved in the degradation of aromatic compounds via the protocatechuate 4,5-cleavage pathway. Catalyzes the hydrolysis of 2-pyrone-4,6-dicarboxylate (PDC) to oxalomesaconate (OMA). Also catalyzes the reverse reaction. This Comamonas testosteroni (Pseudomonas testosteroni) protein is 2-pyrone-4,6-dicarbaxylate hydrolase.